The chain runs to 141 residues: Nuclear transcription factor Y subunit B-1 (141 aa).

Residues 1-23 (MADTPSSPAGDGGESGGSVREQD) form a disordered region. A2 carries the N-acetylalanine modification. A DNA-binding region spans residues 26 to 32 (LPIANIS). Residues 53–64 (VQECVSEFISFI) are subunit association domain (SAD). Positions 114–141 (DNKGSGKSGDGSNRDAGGGVSGEEMPSW) are disordered.

It belongs to the NFYB/HAP3 subunit family. Heterotrimeric transcription factor composed of three components, NF-YA, NF-YB and NF-YC. NF-YB and NF-YC must interact and dimerize for NF-YA association and DNA binding. Binds directly with DPB3-1. As to expression, ubiquitous. Predominantly expressed in leaves, flowers and siliques.

Its subcellular location is the nucleus. Component of the NF-Y/HAP transcription factor complex. The NF-Y complex stimulates the transcription of various genes by recognizing and binding to a CCAAT motif in promoters. The protein is Nuclear transcription factor Y subunit B-1 of Arabidopsis thaliana (Mouse-ear cress).